The primary structure comprises 799 residues: Zinc finger X-linked protein ZXDA (799 aa).

The segment at 1 to 89 (MEIPKLLPAR…QPSGGGDDFF (89 aa)) is disordered. Gly residues predominate over residues 13-26 (LQGGGGGGIPAGGG). C2H2-type zinc fingers lie at residues 267-291 (YLCP…LLTH), 300-324 (FKCP…LQSH), 330-354 (FGCP…MKGH), 360-382 (FKCE…QRSH), 389-413 (YQCA…NRAH), 420-444 (FSCS…LRSH), 450-474 (FLCD…KRKH), 480-504 (FMCP…SITH), 510-534 (FVCP…SKKH), and 543-568 (SRCP…VKRH). The required for interaction with ZXDC stretch occupies residues 267-573 (YLCPEALCGQ…MVKRHKVGQD (307 aa)). Residues 572-699 (QDLLAQLEAA…NMDEVSSVSV (128 aa)) are required for transcriptional activation.

It belongs to the ZXD family. Self-associates. Interacts with ZXDC and CIITA. In terms of tissue distribution, may be expressed in brain, heart, kidney, liver, lung, muscle and placenta.

The protein resides in the nucleus. Its function is as follows. Cooperates with CIITA to promote transcription of MHC class I and MHC class II genes. The chain is Zinc finger X-linked protein ZXDA (ZXDA) from Homo sapiens (Human).